Reading from the N-terminus, the 24-residue chain is RuBisCO large subunit-binding protein subunit beta, chloroplastic (24 aa).

It belongs to the chaperonin (HSP60) family. As to quaternary structure, oligomer of probably six alpha and six beta subunits.

Its subcellular location is the plastid. It localises to the chloroplast. Functionally, this protein binds RuBisCO small and large subunits and is implicated in the assembly of the enzyme oligomer. The chain is RuBisCO large subunit-binding protein subunit beta, chloroplastic from Populus euphratica (Euphrates poplar).